The sequence spans 184 residues: Guanylate kinase (184 aa).

Positions K5–K183 constitute a Guanylate kinase-like domain. ATP is bound at residue G12–G19.

This sequence belongs to the guanylate kinase family.

The protein resides in the cytoplasm. It catalyses the reaction GMP + ATP = GDP + ADP. Functionally, essential for recycling GMP and indirectly, cGMP. The chain is Guanylate kinase from Prochlorococcus marinus subsp. pastoris (strain CCMP1986 / NIES-2087 / MED4).